The primary structure comprises 106 residues: ATP-dependent Clp protease adapter protein ClpS (106 aa).

It belongs to the ClpS family. As to quaternary structure, binds to the N-terminal domain of the chaperone ClpA.

Its function is as follows. Involved in the modulation of the specificity of the ClpAP-mediated ATP-dependent protein degradation. This is ATP-dependent Clp protease adapter protein ClpS from Sodalis glossinidius (strain morsitans).